A 329-amino-acid chain; its full sequence is D-alanine--D-alanine ligase (329 aa).

Residues 120–326 (KLWYDAIGIP…FHEFLADCIN (207 aa)) enclose the ATP-grasp domain. 150–205 (AFDKWGKVFVKAARQGSSVGCYSVTNKQSVSQAVNDAFGYSEQVLVEKSVKPRELE) contributes to the ATP binding site. Mg(2+)-binding residues include Asp280, Glu293, and Asn295.

It belongs to the D-alanine--D-alanine ligase family. It depends on Mg(2+) as a cofactor. The cofactor is Mn(2+).

Its subcellular location is the cytoplasm. The catalysed reaction is 2 D-alanine + ATP = D-alanyl-D-alanine + ADP + phosphate + H(+). It functions in the pathway cell wall biogenesis; peptidoglycan biosynthesis. Functionally, cell wall formation. The chain is D-alanine--D-alanine ligase from Vibrio campbellii (strain ATCC BAA-1116).